The following is a 93-amino-acid chain: Pyrimidine/purine nucleoside phosphorylase (93 aa).

It belongs to the nucleoside phosphorylase PpnP family.

It carries out the reaction a purine D-ribonucleoside + phosphate = a purine nucleobase + alpha-D-ribose 1-phosphate. The enzyme catalyses adenosine + phosphate = alpha-D-ribose 1-phosphate + adenine. The catalysed reaction is cytidine + phosphate = cytosine + alpha-D-ribose 1-phosphate. It catalyses the reaction guanosine + phosphate = alpha-D-ribose 1-phosphate + guanine. It carries out the reaction inosine + phosphate = alpha-D-ribose 1-phosphate + hypoxanthine. The enzyme catalyses thymidine + phosphate = 2-deoxy-alpha-D-ribose 1-phosphate + thymine. The catalysed reaction is uridine + phosphate = alpha-D-ribose 1-phosphate + uracil. It catalyses the reaction xanthosine + phosphate = alpha-D-ribose 1-phosphate + xanthine. Its function is as follows. Catalyzes the phosphorolysis of diverse nucleosides, yielding D-ribose 1-phosphate and the respective free bases. Can use uridine, adenosine, guanosine, cytidine, thymidine, inosine and xanthosine as substrates. Also catalyzes the reverse reactions. This Shewanella pealeana (strain ATCC 700345 / ANG-SQ1) protein is Pyrimidine/purine nucleoside phosphorylase.